A 156-amino-acid polypeptide reads, in one-letter code: Cyanate hydratase (156 aa).

Residues R96, E99, and S122 contribute to the active site.

It belongs to the cyanase family.

It catalyses the reaction cyanate + hydrogencarbonate + 3 H(+) = NH4(+) + 2 CO2. In terms of biological role, catalyzes the reaction of cyanate with bicarbonate to produce ammonia and carbon dioxide. The chain is Cyanate hydratase from Pseudomonas entomophila (strain L48).